We begin with the raw amino-acid sequence, 397 residues long: Enoyl-[acyl-carrier-protein] reductase [NADH] (397 aa).

Residues 48-53 (GASTGY), 74-75 (FE), 111-112 (DA), and 139-140 (VA) contribute to the NAD(+) site. Tyrosine 225 contributes to the substrate binding site. Tyrosine 235 acts as the Proton donor in catalysis. Residues lysine 244 and 273 to 275 (VVT) each bind NAD(+).

The protein belongs to the TER reductase family. In terms of assembly, monomer.

It carries out the reaction a 2,3-saturated acyl-[ACP] + NAD(+) = a (2E)-enoyl-[ACP] + NADH + H(+). The protein operates within lipid metabolism; fatty acid biosynthesis. Its function is as follows. Involved in the final reduction of the elongation cycle of fatty acid synthesis (FAS II). Catalyzes the reduction of a carbon-carbon double bond in an enoyl moiety that is covalently linked to an acyl carrier protein (ACP). In Burkholderia pseudomallei (strain 1106a), this protein is Enoyl-[acyl-carrier-protein] reductase [NADH].